The primary structure comprises 274 residues: Nuclease (274 aa).

Residues 1 to 24 form the signal peptide; that stretch reads MGICGKLGVAALVALIVGCSPVQS. The active-site Proton acceptor is the His124. Mn(2+) is bound by residues Asn155, Asp246, Glu249, Asp255, Phe256, Gln265, and Glu269.

The protein belongs to the DNA/RNA non-specific endonuclease family. As to quaternary structure, monomer. The cofactor is Mn(2+). Mg(2+) serves as cofactor. Ca(2+) is required as a cofactor. It depends on Co(2+) as a cofactor. In terms of processing, the N-terminus is blocked.

It is found in the periplasm. Functionally, catalyzes the degradation of both RNA and DNA; has the potential to act as an endonuclease. This chain is Nuclease (nucA), found in Nostoc sp. (strain PCC 7120 / SAG 25.82 / UTEX 2576).